The following is a 37-amino-acid chain: MIEPILLGIVLGMVVVTLAGLFVAAYRQYQRSNKIGL.

Residues 5 to 25 (ILLGIVLGMVVVTLAGLFVAA) form a helical membrane-spanning segment.

It belongs to the PetG family. As to quaternary structure, the 4 large subunits of the cytochrome b6-f complex are cytochrome b6, subunit IV (17 kDa polypeptide, PetD), cytochrome f and the Rieske protein, while the 4 small subunits are PetG, PetL, PetM and PetN. The complex functions as a dimer.

It is found in the cellular thylakoid membrane. In terms of biological role, component of the cytochrome b6-f complex, which mediates electron transfer between photosystem II (PSII) and photosystem I (PSI), cyclic electron flow around PSI, and state transitions. PetG is required for either the stability or assembly of the cytochrome b6-f complex. This chain is Cytochrome b6-f complex subunit 5, found in Synechococcus sp. (strain JA-2-3B'a(2-13)) (Cyanobacteria bacterium Yellowstone B-Prime).